The chain runs to 591 residues: Frizzled and smoothened-like protein F (591 aa).

The signal sequence occupies residues Met1–Gly17. Residues Phe18 to Lys244 are Extracellular-facing. The FZ domain maps to Ile30–Pro177. 3 disulfide bridges follow: Cys35/Cys105, Cys48/Cys98, and Cys123/Cys174. Residues Asn167, Asn187, Asn202, and Asn230 are each glycosylated (N-linked (GlcNAc...) asparagine). The helical transmembrane segment at Ile245–Asn265 threads the bilayer. The Cytoplasmic segment spans residues Lys266–Thr275. A helical membrane pass occupies residues Cys276–Gly296. Residues Tyr297–Gly321 lie on the Extracellular side of the membrane. A helical membrane pass occupies residues Ala322 to Leu342. Residues Tyr343 to Lys353 lie on the Cytoplasmic side of the membrane. The helical transmembrane segment at Phe354–Ala374 threads the bilayer. The Extracellular segment spans residues Thr375 to Ser397. A helical transmembrane segment spans residues Leu398–Ile418. Residues His419–Pro442 lie on the Cytoplasmic side of the membrane. A helical transmembrane segment spans residues Leu443–Ile463. Over Glu464 to Ser495 the chain is Extracellular. Residue Asn483 is glycosylated (N-linked (GlcNAc...) asparagine). The chain crosses the membrane as a helical span at residues Tyr496–Phe516. Over Tyr517–Asn591 the chain is Cytoplasmic. Residues Ser538–Asp571 are compositionally biased toward low complexity. Positions Ser538 to Asn573 are disordered.

It belongs to the G-protein coupled receptor Fz/Smo family.

It is found in the membrane. This is Frizzled and smoothened-like protein F (fslF) from Dictyostelium discoideum (Social amoeba).